Here is a 384-residue protein sequence, read N- to C-terminus: tRNA-specific 2-thiouridylase MnmA (384 aa).

ATP contacts are provided by residues 30-37 (GMSGGVDS) and Met56. The tract at residues 116–118 (NPD) is interaction with target base in tRNA. Catalysis depends on Cys121, which acts as the Nucleophile. Cys121 and Cys218 are disulfide-bonded. An ATP-binding site is contributed by Gly146. An interaction with tRNA region spans residues 168 to 170 (KDQ). The Cysteine persulfide intermediate role is filled by Cys218. The tract at residues 330–331 (RY) is interaction with tRNA.

The protein belongs to the MnmA/TRMU family.

It localises to the cytoplasm. The catalysed reaction is S-sulfanyl-L-cysteinyl-[protein] + uridine(34) in tRNA + AH2 + ATP = 2-thiouridine(34) in tRNA + L-cysteinyl-[protein] + A + AMP + diphosphate + H(+). Functionally, catalyzes the 2-thiolation of uridine at the wobble position (U34) of tRNA, leading to the formation of s(2)U34. In Haemophilus ducreyi (strain 35000HP / ATCC 700724), this protein is tRNA-specific 2-thiouridylase MnmA.